The following is a 74-amino-acid chain: Small ribosomal subunit protein bS18 (74 aa).

Belongs to the bacterial ribosomal protein bS18 family. In terms of assembly, part of the 30S ribosomal subunit. Forms a tight heterodimer with protein bS6.

Functionally, binds as a heterodimer with protein bS6 to the central domain of the 16S rRNA, where it helps stabilize the platform of the 30S subunit. The chain is Small ribosomal subunit protein bS18 from Novosphingobium aromaticivorans (strain ATCC 700278 / DSM 12444 / CCUG 56034 / CIP 105152 / NBRC 16084 / F199).